The primary structure comprises 251 residues: MDGDSFQQWKNQCLNKCDFSKKGSVDEDISHVVSFINSQDRYFTTSSCSGRIILFDAVSDCPDVQKQNCSWLFVTHQKCQMEDVVRGLEKSVGDATFKFEPFVLHVQCKQLEDAQLLHTVAINSGFRNSGITVGKKGKIIMAVRSTHCLEVPLSHRSHVLVTHQYLDFLVGVANQKMEENLKRIQRFSECLQAALQPQEEKCSFKEADNKTVYRRRRKRTQDVSVTDSSQNTQEHHENTEEEIDCDLLFLL.

A disordered region spans residues 213-240 (YRRRRKRTQDVSVTDSSQNTQEHHENTE).

This sequence belongs to the TYW3 family.

It carries out the reaction 4-demethyl-7-[(3S)-3-amino-3-carboxypropyl]wyosine(37) in tRNA(Phe) + S-adenosyl-L-methionine = 7-[(3S)-3-amino-3-carboxypropyl]wyosine(37) in tRNA(Phe) + S-adenosyl-L-homocysteine + H(+). The protein operates within tRNA modification; wybutosine-tRNA(Phe) biosynthesis. In terms of biological role, probable S-adenosyl-L-methionine-dependent methyltransferase that acts as a component of the wybutosine biosynthesis pathway. Wybutosine is a hyper modified guanosine with a tricyclic base found at the 3'-position adjacent to the anticodon of eukaryotic phenylalanine tRNA. The sequence is that of tRNA wybutosine-synthesizing protein 3 homolog (tyw3) from Danio rerio (Zebrafish).